A 44-amino-acid polypeptide reads, in one-letter code: uncharacterized protein (44 aa).

This is an uncharacterized protein from Treponema pallidum (strain Nichols).